We begin with the raw amino-acid sequence, 195 residues long: Molybdenum cofactor guanylyltransferase (195 aa).

GTP contacts are provided by residues leucine 10–glycine 12, lysine 23, asparagine 51, aspartate 69, and aspartate 99. Aspartate 99 contacts Mg(2+).

It belongs to the MobA family. As to quaternary structure, monomer. Mg(2+) serves as cofactor.

It localises to the cytoplasm. The enzyme catalyses Mo-molybdopterin + GTP + H(+) = Mo-molybdopterin guanine dinucleotide + diphosphate. Functionally, transfers a GMP moiety from GTP to Mo-molybdopterin (Mo-MPT) cofactor (Moco or molybdenum cofactor) to form Mo-molybdopterin guanine dinucleotide (Mo-MGD) cofactor. This is Molybdenum cofactor guanylyltransferase from Histophilus somni (strain 2336) (Haemophilus somnus).